The following is a 342-amino-acid chain: Cathepsin B-like cysteine proteinase (342 aa).

An N-terminal signal peptide occupies residues 1 to 17 (MLKIAVYIVSLFTFLEA). Residues 18 to 89 (HVTTRNNQRI…TVDHHDLNVE (72 aa)) constitute a propeptide, activation peptide. Intrachain disulfides connect cysteine 103–cysteine 132, cysteine 115–cysteine 159, cysteine 151–cysteine 217, cysteine 152–cysteine 155, cysteine 188–cysteine 221, and cysteine 196–cysteine 207. Cysteine 118 is an active-site residue. Active-site residues include histidine 288 and asparagine 308.

Belongs to the peptidase C1 family. In terms of tissue distribution, intestine (gut).

In terms of biological role, thiol protease. Has a role as a digestive enzyme. The protein is Cathepsin B-like cysteine proteinase (CATB) of Schistosoma japonicum (Blood fluke).